A 123-amino-acid chain; its full sequence is uncharacterized protein (123 aa).

The N-terminal stretch at 1–25 (MKHGIKALLITLSLACAGMSHSALA) is a signal peptide. Residues 40-53 (EAPAAQSKAAVPAK) are compositionally biased toward low complexity. The disordered stretch occupies residues 40-62 (EAPAAQSKAAVPAKASDEEGTRV). HhH domains follow at residues 60–90 (TRVS…IVSY) and 91–120 (REEY…NLAV).

This is an uncharacterized protein from Escherichia coli (strain K12).